We begin with the raw amino-acid sequence, 385 residues long: Cytochrome b (385 aa).

A run of 4 helical transmembrane segments spans residues 32 to 52 (FGSL…TLAM), 76 to 98 (WLVR…LHIG), 113 to 133 (TWAI…LGYV), and 179 to 199 (FFAL…MHLI). Heme b is bound by residues His-82 and His-96. Heme b-binding residues include His-183 and His-197. His-202 is a binding site for a ubiquinone. 4 helical membrane passes run 226-246 (FIFK…IFVF), 290-310 (LLGV…PITD), 322-342 (LSKV…QIGA), and 349-369 (FIEL…VIVP).

Belongs to the cytochrome b family. In terms of assembly, fungal cytochrome b-c1 complex contains 10 subunits; 3 respiratory subunits, 2 core proteins and 5 low-molecular weight proteins. Cytochrome b-c1 complex is a homodimer. Heme b serves as cofactor.

It localises to the mitochondrion inner membrane. In terms of biological role, component of the ubiquinol-cytochrome c reductase complex (complex III or cytochrome b-c1 complex) that is part of the mitochondrial respiratory chain. The b-c1 complex mediates electron transfer from ubiquinol to cytochrome c. Contributes to the generation of a proton gradient across the mitochondrial membrane that is then used for ATP synthesis. The polypeptide is Cytochrome b (cob) (Aspergillus tubingensis).